The following is a 346-amino-acid chain: Protein farnesyltransferase/geranylgeranyltransferase type-1 subunit alpha (346 aa).

PFTA repeat units follow at residues 59–93 (RSTR…ALGV), 94–128 (DLRE…KLGA), 130–164 (AVTN…ALGG), 165–198 (WEDE…RSPL), and 205–239 (MREL…NDTQ).

This sequence belongs to the protein prenyltransferase subunit alpha family. As to quaternary structure, heterodimer of an alpha and a beta subunit. Mg(2+) is required as a cofactor.

The enzyme catalyses L-cysteinyl-[protein] + (2E,6E)-farnesyl diphosphate = S-(2E,6E)-farnesyl-L-cysteinyl-[protein] + diphosphate. It carries out the reaction geranylgeranyl diphosphate + L-cysteinyl-[protein] = S-geranylgeranyl-L-cysteinyl-[protein] + diphosphate. Functionally, essential subunit of both the farnesyltransferase and the geranylgeranyltransferase complex. Contributes to the transfer of a farnesyl or geranylgeranyl moiety from farnesyl or geranylgeranyl diphosphate to a cysteine at the fourth position from the C-terminus of several proteins having the C-terminal sequence Cys-aliphatic-aliphatic-X. The chain is Protein farnesyltransferase/geranylgeranyltransferase type-1 subunit alpha (FTA) from Solanum lycopersicum (Tomato).